Consider the following 393-residue polypeptide: Nucleosome assembly protein 1-like 1-B (393 aa).

Positions 1–10 (MANIDNKEQT) are enriched in basic and acidic residues. Residues 1–38 (MANIDNKEQTELDQQDMEDVEDVEEEETGEEANSKARQ) are disordered. Acidic residues predominate over residues 11–30 (ELDQQDMEDVEDVEEEETGE). Residues 126–151 (YEPTEEECEWKVDEEEDIAEDLKEKA) carry the NAP1L motif motif. Positions 274–280 (IKKKQKH) match the Nuclear localization signal motif. Residues 347-377 (AIEDDDDDYDEEGEEADDEEGEEEADEDHDP) are compositionally biased toward acidic residues. Residues 347–393 (AIEDDDDDYDEEGEEADDEEGEEEADEDHDPDFDPKKAQNPAECKQQ) form a disordered region.

The protein belongs to the nucleosome assembly protein (NAP) family. As to quaternary structure, forms homomultimers. Interacts with histone b4. Interacts with the B-type cyclins ccnb1 and ccnb2. Post-translationally, phosphorylated by cyclin B-cdc2 kinase complexes.

Its subcellular location is the cytoplasm. The protein resides in the nucleus. In terms of biological role, acts as a chaperone for the linker histone to facilitate deposition of histone B4 onto linker DNA. Required for both remodeling of sperm chromatin into nucleosomes, and linker histone binding to nucleosome core dimers. Plays a role in tissue-specific gene regulation. Required for primitive hemopoiesis, acting upstream of tal1/scl. The protein is Nucleosome assembly protein 1-like 1-B (nap1l1-b) of Xenopus laevis (African clawed frog).